A 686-amino-acid chain; its full sequence is Hexamerin 70c (686 aa).

An N-terminal signal peptide occupies residues 1–19 (MLSKVVLLVALAAICGAQG). Residues 32–155 (FLHKQKKIFD…IAVLYRPDTK (124 aa)) form the Hemocyanin N-terminal domain. The Hemocyanin middle domain occupies 161 to 431 (AIYEIYPNYF…MLYQNILSYF (271 aa)). 2 N-linked (GlcNAc...) asparagine glycosylation sites follow: Asn-205 and Asn-662. The region spanning 440-676 (QYSQSELQMP…NMYFKDVFIY (237 aa)) is the Hemocyanin C-terminal domain.

Belongs to the hemocyanin/hexamerin family. Probable homohexamer. In terms of tissue distribution, expressed in the fat body and secreted into the hemolymph (at protein level). Present in trophocytes and oenocytes of the fat body (at protein level). Not expressed in ovary or testis.

The protein localises to the secreted. Its subcellular location is the nucleus. It is found in the cytoplasm. It localises to the cytoplasmic granule. Storage protein that may function as a nutrient supply to compensate for lack of dietary proteins during metamorphosis and egg production. The polypeptide is Hexamerin 70c (Apis mellifera (Honeybee)).